A 486-amino-acid polypeptide reads, in one-letter code: Transcription enhancer factor-like protein egl-44 (486 aa).

Residues 47-57 show a composition bias toward low complexity; it reads GTTTPTTTSGG. Residues 47 to 87 form a disordered region; that stretch reads GTTTPTTTSGGQMMTLSPPAGDGPGSAGSMAPESTSSLSDL. Positions 88 to 164 form a DNA-binding region, TEA; that stretch reads SGDAEGVWSI…QVLARKKLRD (77 aa). A disordered region spans residues 165 to 188; that stretch reads EQAKKKGDIPSLLQQASPPGGVKS.

In terms of assembly, interacts (via N-terminus) with egl-46 (via C-terminus); the interaction is direct; the interaction may regulate transcription. Interacts with yap-1 (via WW domain); the interaction may regulate transcription. As to expression, expressed in HSN neurons in embryos and in the FLP neurons from the L1 stage through to adults. Not expressed in touch cells. Also expressed in larval hypodermis, intestine, pharyngeal muscle and other neurons. In adults expression is lost from some neurons, is weaker in the hypodermis but remains in the intestine. Expressed in HOB neuron, ray neurons RnA and RnB, and the ray structural cell, Rnst; rays are male-specific genital sensilla (simple sense organs).

Its subcellular location is the nucleus. Functionally, transcription factor. Binds to DNA sequence motif 5'-CATNNNNAAATGCAT-3' as a heterodimer with egl-46. Represses expression of genes involved in differentiation of touch receptor neurons (TRN), probably acting as a heterodimer with egl-46, perhaps by occupying similar cis-regulatory elements as an unc-86/mec-3 heterodimer. Plays a role in cell fate specification of neurons, including the hook neuron HOB, and touch receptor neurons. Involved in male mating behavior, acting in concert with egl-46, via modulation of expression of polycystins lov-1 and pkd-2, homeodomain protein ceh-26, and neuropeptide-like protein nlp-8. Acts upstream of egl-46 to prevent touch cell differentiation in FLP neurons. Plays a role in neuron differentiation by repressing the expression of zag-1 in FLP neurons, probably acting as a heterodimer with egl-46; because zag-1 represses expression of egl-46 and egl-44, together these proteins form a bistable, negative-feedback loop that regulates the choice between neuronal fates. Also promotes HSN neuron development. In association with egl-46, regulates cell cycle exit in the neuronal Q cell lineage. Plays a role in specifying commissural dendrites of the PVD nociceptive neurons, acting in concert with egl-46. May be involved in thermal stress response downstream of yap-1. This is Transcription enhancer factor-like protein egl-44 (egl-44) from Caenorhabditis elegans.